The sequence spans 593 residues: Glutamate decarboxylase 1 (593 aa).

The segment covering 1–12 (MASSTPSPATSS) has biased composition (low complexity). Positions 1–22 (MASSTPSPATSSNAGADPNTTN) are disordered. Phosphoserine is present on serine 77. A 4-aminobutanoate-binding site is contributed by 189 to 191 (QLS). Residue lysine 404 is modified to N6-(pyridoxal phosphate)lysine. Arginine 566 is a 4-aminobutanoate binding site.

It belongs to the group II decarboxylase family. Homodimer. Pyridoxal 5'-phosphate is required as a cofactor.

It catalyses the reaction L-glutamate + H(+) = 4-aminobutanoate + CO2. In terms of biological role, catalyzes the synthesis of the inhibitory neurotransmitter gamma-aminobutyric acid (GABA) with pyridoxal 5'-phosphate as cofactor. The chain is Glutamate decarboxylase 1 (Gad1) from Mus musculus (Mouse).